A 101-amino-acid chain; its full sequence is Acylphosphatase-1 (101 aa).

S2 bears the N-acetylserine mark. N-acetylalanine is present on S2. The 91-residue stretch at 11–101 (SVDYEIFGKV…LDYTDFQIVK (91 aa)) folds into the Acylphosphatase-like domain. Residues R26 and N44 contribute to the active site.

Belongs to the acylphosphatase family. Organ-common type isozyme is found in many different tissues.

The catalysed reaction is an acyl phosphate + H2O = a carboxylate + phosphate + H(+). The chain is Acylphosphatase-1 (ACYP1) from Bos taurus (Bovine).